The following is a 300-amino-acid chain: Ribosomal protein L11 methyltransferase (300 aa).

S-adenosyl-L-methionine-binding residues include Thr152, Gly173, Asp195, and Asn234.

This sequence belongs to the methyltransferase superfamily. PrmA family.

The protein localises to the cytoplasm. It carries out the reaction L-lysyl-[protein] + 3 S-adenosyl-L-methionine = N(6),N(6),N(6)-trimethyl-L-lysyl-[protein] + 3 S-adenosyl-L-homocysteine + 3 H(+). Functionally, methylates ribosomal protein L11. In Burkholderia cenocepacia (strain ATCC BAA-245 / DSM 16553 / LMG 16656 / NCTC 13227 / J2315 / CF5610) (Burkholderia cepacia (strain J2315)), this protein is Ribosomal protein L11 methyltransferase.